The following is a 1010-amino-acid chain: MKAFFEKLLGFGPDRAIKQIEPIVRRINSLEPSVEALSNAELRAKTDEFKQRLADGETLDDLLPEAFAVVREAARRTIGQRHYDVQLIGGIVLHQGKIAEMKTGEGKTLVATLPLYLNALTGRGCHLVTVNDYLAKVGAGWMGPIYHLLGLSVATISHEYSAIYDPDYVDPKANPDDRRLVHWRPCSRREAYLADITYGTNNEFGFDYLRDNMAWDLAQLVQRELHYAIVDEVDNILIDEARTPLIISGPAQESGDEYRRFATLVRHLKPSPYTPDQIKKQMIEDPEGDFVIEPRSKSIQLTDQGVAKIERLLKIPEGESLYDPKYYRLTHYLDNALRAEFIYQRDRDYIVEHGEVIIVDEFTGRKMPGRRWSDGLHQAVEAKEGVKPRQENVTLATITFQNYFRMYQKLAGMTGTAYTEREEFAKIYNLEVVVIPTHRPMIRKDYDDQIYRSEKAKFEAVIREIEEMHAIGRPVLVGTTSVETSERLSEMLKRRGIKHEVLNAKYHEREARIVAQAGRKGAVTIATNMAGRGTDILLGGNPDGLIEEILAQRGIKIEQATPEQIRAAQEEARRITEAEGKEVRELGGLHIIGTERHESRRIDNQLRGRAGRQGDPGSSRFYLSLEDDLLRRFGPMDRVKGLMERLGVDDSLPIEAGLINRTIESAQTRVEGYNFDIRKHTVEFDDVMNKQRTVIYADRRRILEGENMRERVLDMIADEVHALVERYLPETKGRADDFEEWDIEGLVRAVRTIDPLLDETKLSPEQLEHLSRQEIEDAIMQAIEDDYQEREKAIGEENMRLVERRMMLSAIDRQWIDYLTGMEDLRQEIGLQAVAQRDPLIEYQRNAYAMFEELKANIQRDIVYQIIPVSFQYEQHLRQVEAEQQRRLLAAQQAGAADGNAKGARTVRHSVRLPGRNEPCPCGSGKKFKVCHWGREEELIALLQQRQTDQHAAVAADTPAQPAPQATATRPPTSQVPRGRAAPPPANPQPRSGKSPAQAPRGKGASARKK.

Residues glutamine 86, 104–108, and aspartate 535 each bind ATP; that span reads GEGKT. Low complexity predominate over residues 893 to 904; the sequence is QAGAADGNAKGA. The disordered stretch occupies residues 893-916; sequence QAGAADGNAKGARTVRHSVRLPGR. 4 residues coordinate Zn(2+): cysteine 920, cysteine 922, cysteine 931, and histidine 932. Residues 950–981 are compositionally biased toward low complexity; the sequence is QHAAVAADTPAQPAPQATATRPPTSQVPRGRA. Residues 950–1010 form a disordered region; that stretch reads QHAAVAADTP…RGKGASARKK (61 aa).

This sequence belongs to the SecA family. Monomer and homodimer. Part of the essential Sec protein translocation apparatus which comprises SecA, SecYEG and auxiliary proteins SecDF. Other proteins may also be involved. Zn(2+) serves as cofactor.

The protein resides in the cell membrane. It is found in the cytoplasm. The catalysed reaction is ATP + H2O + cellular proteinSide 1 = ADP + phosphate + cellular proteinSide 2.. In terms of biological role, part of the Sec protein translocase complex. Interacts with the SecYEG preprotein conducting channel. Has a central role in coupling the hydrolysis of ATP to the transfer of proteins into and across the cell membrane, serving as an ATP-driven molecular motor driving the stepwise translocation of polypeptide chains across the membrane. The chain is Protein translocase subunit SecA from Roseiflexus sp. (strain RS-1).